The following is a 316-amino-acid chain: GMP reductase (316 aa).

The active-site Thioimidate intermediate is the Cys-175. 202-225 (VIADGGIVEHGDIAKALVCGATMV) serves as a coordination point for NADP(+).

Belongs to the IMPDH/GMPR family. GuaC type 2 subfamily.

It carries out the reaction IMP + NH4(+) + NADP(+) = GMP + NADPH + 2 H(+). Its function is as follows. Catalyzes the irreversible NADPH-dependent deamination of GMP to IMP. It functions in the conversion of nucleobase, nucleoside and nucleotide derivatives of G to A nucleotides, and in maintaining the intracellular balance of A and G nucleotides. The sequence is that of GMP reductase from Chromobacterium violaceum (strain ATCC 12472 / DSM 30191 / JCM 1249 / CCUG 213 / NBRC 12614 / NCIMB 9131 / NCTC 9757 / MK).